The sequence spans 518 residues: MLNPLQVLQELNESSSFLQPLAFTLLAIFLVLLYTWYSSTKTTTQKSTQPPSPPKLPIIGNLHQIGSYPHRSLQALSQRHGPLMLLHFGSVPVLVVSSAEAAREILKTHDLTFSDRPKSTIFEKLLYNYKDVASAPYGEYWRQVRSICVLNLLSNRRVRSFRSVREEETKSMIRNIKGSSSSVLNLSEMFVRLTNDVVCKVALGRKYSDGEGGESGRMFKEILGEFGDLLGTVNIGDYVPWLSWLSHVNGLGAKLDKVAKQLDDFIDTVVQEHMNHSSRSGDDDQKDFLDILLAIQKETSAGIPIDGVSVKGIILDMFAAGTDTTYSALEWAMTELLRHPRVMNKLQNEVRGIVGNRTDVITEDDLVEMHYLKAVTKETLRLHPPIPLLVPRMSTRDVEVNGYNIKANTQVFISAWQIGRDPKLYDKPEEFEPERFLNNGIDYKGNDFELIPFGAGRRVCPGIQFAMAVNEIALANIVHKFDWALPDEASGEDLDMTETTGLTAHKKYPLKAVAFPHF.

An N-linked (GlcNAc...) asparagine glycan is attached at Asn-12. A helical membrane pass occupies residues 17-37 (FLQPLAFTLLAIFLVLLYTWY). Residues Asn-185, Asn-275, and Asn-356 are each glycosylated (N-linked (GlcNAc...) asparagine). Cys-460 is a heme binding site.

It belongs to the cytochrome P450 family. The cofactor is heme. In terms of tissue distribution, expressed at similar levels in fruit kernel, seedlings, leaves, stems and buds.

It is found in the membrane. This Prunus mume (Japanese apricot) protein is Cytochrome P450 736A117.